A 144-amino-acid polypeptide reads, in one-letter code: Peptidyl-Asp metalloendopeptidase (144 aa).

A Zn(2+)-binding site is contributed by histidine 64. Residue glutamate 65 is part of the active site. A Zn(2+)-binding site is contributed by histidine 68.

This sequence belongs to the peptidase M72 family. Zn(2+) serves as cofactor.

The catalysed reaction is Cleavage of Xaa-|-Asp, Xaa-|-Glu and Xaa-|-cysteic acid bonds.. Metalloprotease, specifically cleaves on the N-terminal side of aspartyl, glutamyl and cysteic acid residues. The sequence is that of Peptidyl-Asp metalloendopeptidase from Pseudomonas fragi.